We begin with the raw amino-acid sequence, 331 residues long: Mitochondrial respiration co-chaperone MRJ1 (331 aa).

A mitochondrion-targeting transit peptide spans 1 to 36 (MLSFQATVRPLAVSSRLHSPAAHIWRRNAHTAAMSD). The tract at residues 35-66 (SDDSLDQGSSSSYGDSASQPHLGKGKGRQDSL) is disordered. Positions 40–53 (DQGSSSSYGDSASQ) are enriched in low complexity. One can recognise a J domain in the interval 83–147 (DPFEVMALDR…SSRSAFLKTG (65 aa)). The disordered stretch occupies residues 203 to 226 (DGSQGWRPYEDPSKGFSPPTSGPA). The IQ domain occupies 275–303 (RALAQARYEAATHGHIRREQIRRRVREAE).

It belongs to the DnaJ family. In terms of assembly, interacts with QCR2.

The protein resides in the mitochondrion. Mitochondrial co-chaperone required for ubiquinol-cytochrome c oxidoreductase (mitochondrial respiratory chain complex III) activity. In Cryptococcus neoformans var. grubii serotype A (strain H99 / ATCC 208821 / CBS 10515 / FGSC 9487) (Filobasidiella neoformans var. grubii), this protein is Mitochondrial respiration co-chaperone MRJ1.